Reading from the N-terminus, the 337-residue chain is Phenylalanine--tRNA ligase alpha subunit (337 aa).

Glu252 lines the Mg(2+) pocket.

The protein belongs to the class-II aminoacyl-tRNA synthetase family. Phe-tRNA synthetase alpha subunit type 1 subfamily. In terms of assembly, tetramer of two alpha and two beta subunits. Mg(2+) serves as cofactor.

It is found in the cytoplasm. The enzyme catalyses tRNA(Phe) + L-phenylalanine + ATP = L-phenylalanyl-tRNA(Phe) + AMP + diphosphate + H(+). The polypeptide is Phenylalanine--tRNA ligase alpha subunit (Saccharophagus degradans (strain 2-40 / ATCC 43961 / DSM 17024)).